The chain runs to 256 residues: MKQKKLLYTGKAKSVYHTDEKGTLIVEFRDDITAFDGGKKDTLKNKGSYNAGVSAFFFSYLEKNGVKTHFLEMQDESRMAVRELSMIPLEVIVRNYAAGSIVRNYPFKEGTPLKPPVIVIDYKDDSRHDPMLNDELIVALKLATPAELKKIKAIALKINTLLSGLLAKQGITLVDFKLEFGRQGTTIYLGDEISMDSMRLWDKKTGESLDKDVYRFNKGDVMATYNRVAARITKPQKPAAAKKKAPVSKKTVKRTR.

Residues 234-256 (KPQKPAAAKKKAPVSKKTVKRTR) are disordered. The span at 240 to 256 (AAKKKAPVSKKTVKRTR) shows a compositional bias: basic residues.

Belongs to the SAICAR synthetase family.

It carries out the reaction 5-amino-1-(5-phospho-D-ribosyl)imidazole-4-carboxylate + L-aspartate + ATP = (2S)-2-[5-amino-1-(5-phospho-beta-D-ribosyl)imidazole-4-carboxamido]succinate + ADP + phosphate + 2 H(+). The protein operates within purine metabolism; IMP biosynthesis via de novo pathway; 5-amino-1-(5-phospho-D-ribosyl)imidazole-4-carboxamide from 5-amino-1-(5-phospho-D-ribosyl)imidazole-4-carboxylate: step 1/2. This is Phosphoribosylaminoimidazole-succinocarboxamide synthase from Methanoregula boonei (strain DSM 21154 / JCM 14090 / 6A8).